Consider the following 174-residue polypeptide: Translation initiation factor IF-3 (174 aa).

Belongs to the IF-3 family. As to quaternary structure, monomer.

Its subcellular location is the cytoplasm. Its function is as follows. IF-3 binds to the 30S ribosomal subunit and shifts the equilibrium between 70S ribosomes and their 50S and 30S subunits in favor of the free subunits, thus enhancing the availability of 30S subunits on which protein synthesis initiation begins. In Azorhizobium caulinodans (strain ATCC 43989 / DSM 5975 / JCM 20966 / LMG 6465 / NBRC 14845 / NCIMB 13405 / ORS 571), this protein is Translation initiation factor IF-3.